The sequence spans 449 residues: Phosphoglucosamine mutase (449 aa).

Serine 104 functions as the Phosphoserine intermediate in the catalytic mechanism. The Mg(2+) site is built by serine 104, aspartate 243, aspartate 245, and aspartate 247. Serine 104 carries the phosphoserine modification.

Belongs to the phosphohexose mutase family. It depends on Mg(2+) as a cofactor. Post-translationally, activated by phosphorylation.

It carries out the reaction alpha-D-glucosamine 1-phosphate = D-glucosamine 6-phosphate. Functionally, catalyzes the conversion of glucosamine-6-phosphate to glucosamine-1-phosphate. The chain is Phosphoglucosamine mutase from Xanthomonas campestris pv. campestris (strain 8004).